The following is a 355-amino-acid chain: Methionine import ATP-binding protein MetN 1 (355 aa).

An ABC transporter domain is found at I6–V245. G42–S49 is a binding site for ATP.

It belongs to the ABC transporter superfamily. Methionine importer (TC 3.A.1.24) family. The complex is composed of two ATP-binding proteins (MetN), two transmembrane proteins (MetI) and a solute-binding protein (MetQ).

It is found in the cell membrane. The enzyme catalyses L-methionine(out) + ATP + H2O = L-methionine(in) + ADP + phosphate + H(+). The catalysed reaction is D-methionine(out) + ATP + H2O = D-methionine(in) + ADP + phosphate + H(+). Functionally, part of the ABC transporter complex MetNIQ involved in methionine import. Responsible for energy coupling to the transport system. The chain is Methionine import ATP-binding protein MetN 1 from Lactiplantibacillus plantarum (strain ATCC BAA-793 / NCIMB 8826 / WCFS1) (Lactobacillus plantarum).